We begin with the raw amino-acid sequence, 558 residues long: NAD(P)H-quinone oxidoreductase chain 4 (558 aa).

Transmembrane regions (helical) follow at residues 25–45, 56–76, 90–110, 111–131, 133–153, 157–177, 189–209, 230–250, 264–284, 298–318, 327–347, 353–373, 397–417, 438–458, and 485–505; these read FPWL…VPFV, WFAL…YLTG, VSWL…LSMP, LILL…PVTF, PKLF…VFAV, LLFF…LAIW, FILY…AMGF, GFEL…LPIV, TAPV…YALM, FAPL…LTSF, IAYS…SFSE, AMLQ…LVGA, FALW…SGFV, IVID…LLSM, and VYII…PKLM.

It belongs to the complex I subunit 4 family.

The protein localises to the cellular thylakoid membrane. The catalysed reaction is a plastoquinone + NADH + (n+1) H(+)(in) = a plastoquinol + NAD(+) + n H(+)(out). It carries out the reaction a plastoquinone + NADPH + (n+1) H(+)(in) = a plastoquinol + NADP(+) + n H(+)(out). NDH-1 shuttles electrons from NAD(P)H, via FMN and iron-sulfur (Fe-S) centers, to quinones in the respiratory chain. The immediate electron acceptor for the enzyme in this species is believed to be plastoquinone. Couples the redox reaction to proton translocation (for every two electrons transferred, four hydrogen ions are translocated across the cytoplasmic membrane), and thus conserves the redox energy in a proton gradient. This is NAD(P)H-quinone oxidoreductase chain 4 from Synechococcus sp. (strain CC9311).